An 88-amino-acid polypeptide reads, in one-letter code: MKKTALLAALCSVVSLSSCCRIVDCCFEDPCAPIQCSPCESKKKDVDGGCNSCNGYVPACKPCGGDTHQDAEHGPQAREIPVDGKCRQ.

A signal peptide spans 1-18 (MKKTALLAALCSVVSLSS). Residue cysteine 19 is the site of N-palmitoyl cysteine attachment. Cysteine 19 carries S-diacylglycerol cysteine lipidation. Residues 67-88 (THQDAEHGPQAREIPVDGKCRQ) form a disordered region.

In terms of assembly, part of a disulfide cross-linked outer membrane complex (COMC) composed of the major outer membrane porin (MOMP), the small cysteine-rich protein (OmcA) and the large cysteine-rich periplasmic protein (OmcB).

The protein resides in the cell outer membrane. Its function is as follows. In elementary bodies (EBs, the infectious stage, which is able to survive outside the host cell) provides the structural integrity of the outer envelope through disulfide cross-links with the large cysteine-rich periplasmic protein and the major outer membrane porin. It has been described in publications as the Sarkosyl-insoluble COMC (Chlamydia outer membrane complex), and serves as the functional equivalent of peptidoglycan. The sequence is that of Small cysteine-rich outer membrane protein OmcA (omcA) from Chlamydia trachomatis serovar L2 (strain ATCC VR-902B / DSM 19102 / 434/Bu).